Reading from the N-terminus, the 183-residue chain is Small ribosomal subunit protein uS4c (183 aa).

Residues 82-143 form the S4 RNA-binding domain; the sequence is MRLDNILFRL…KQRSKALIQN (62 aa).

It belongs to the universal ribosomal protein uS4 family. In terms of assembly, part of the 30S ribosomal subunit. Contacts protein S5. The interaction surface between S4 and S5 is involved in control of translational fidelity.

It is found in the plastid. The protein resides in the chloroplast. In terms of biological role, one of the primary rRNA binding proteins, it binds directly to 16S rRNA where it nucleates assembly of the body of the 30S subunit. Its function is as follows. With S5 and S12 plays an important role in translational accuracy. This is Small ribosomal subunit protein uS4c (rps4) from Aristea capitata.